The primary structure comprises 345 residues: Ferrochelatase (345 aa).

Residues histidine 199 and glutamate 302 each coordinate Fe cation.

The protein belongs to the ferrochelatase family.

The protein resides in the cytoplasm. It carries out the reaction heme b + 2 H(+) = protoporphyrin IX + Fe(2+). The protein operates within porphyrin-containing compound metabolism; protoheme biosynthesis; protoheme from protoporphyrin-IX: step 1/1. Catalyzes the ferrous insertion into protoporphyrin IX. The protein is Ferrochelatase of Porphyromonas gingivalis (strain ATCC 33277 / DSM 20709 / CIP 103683 / JCM 12257 / NCTC 11834 / 2561).